The following is a 304-amino-acid chain: UDP-3-O-acyl-N-acetylglucosamine deacetylase (304 aa).

Positions 78, 237, and 241 each coordinate Zn(2+). Histidine 264 acts as the Proton donor in catalysis.

It belongs to the LpxC family. Requires Zn(2+) as cofactor.

It catalyses the reaction a UDP-3-O-[(3R)-3-hydroxyacyl]-N-acetyl-alpha-D-glucosamine + H2O = a UDP-3-O-[(3R)-3-hydroxyacyl]-alpha-D-glucosamine + acetate. Its pathway is glycolipid biosynthesis; lipid IV(A) biosynthesis; lipid IV(A) from (3R)-3-hydroxytetradecanoyl-[acyl-carrier-protein] and UDP-N-acetyl-alpha-D-glucosamine: step 2/6. Catalyzes the hydrolysis of UDP-3-O-myristoyl-N-acetylglucosamine to form UDP-3-O-myristoylglucosamine and acetate, the committed step in lipid A biosynthesis. This is UDP-3-O-acyl-N-acetylglucosamine deacetylase from Xylella fastidiosa (strain 9a5c).